The chain runs to 358 residues: Glutamate 5-kinase (358 aa).

An ATP-binding site is contributed by lysine 9. Substrate-binding residues include serine 49, aspartate 136, and asparagine 148. ATP is bound by residues 168–169 (TD) and 210–216 (TGGMTTK). The 79-residue stretch at 275–353 (DAAVEVDAGA…RAEGVLIHRN (79 aa)) folds into the PUA domain.

It belongs to the glutamate 5-kinase family.

The protein resides in the cytoplasm. It carries out the reaction L-glutamate + ATP = L-glutamyl 5-phosphate + ADP. The protein operates within amino-acid biosynthesis; L-proline biosynthesis; L-glutamate 5-semialdehyde from L-glutamate: step 1/2. Its function is as follows. Catalyzes the transfer of a phosphate group to glutamate to form L-glutamate 5-phosphate. The protein is Glutamate 5-kinase of Streptococcus suis (strain 05ZYH33).